The sequence spans 760 residues: NAD(P)H-quinone oxidoreductase subunit 5, chloroplastic (760 aa).

The next 16 membrane-spanning stretches (helical) occupy residues 9–29, 39–59, 89–109, 125–145, 147–167, 185–205, 221–241, 260–280, 282–302, 329–349, 356–376, 398–418, 429–449, 556–576, 620–640, and 734–754; these read WIISFVTLPVPMLIGMGLLLF, IWAFPSVLLLSIVMVFSTDLF, IDPLTSILLILITTVGILVLV, FVYMSFFNTSMLGLVTSSNLI, IYIFWELVGMCSYLLIGFWFT, GDFGLLLGILGLYWITGSFEF, NEVHFLFVTLCAFLLFSGAIA, TPISALIHAATMVAAGIFLVA, LLPLFVVIPYIMKLIALIGII, LGYTMLALGMGSYRAALFHLI, ALLFLGSGSIIHSMEGIVGYS, IAFLLGTLSLCGIPPLACFWS, YSPIFAIIAFSTAGLTAFYMF, ILFPMLVLVLFTLFIGAIGIP, FSVSIASFGIFIASSLYKPIY, and FYLLLYLFYVLIFLLISSSIF.

Belongs to the complex I subunit 5 family. As to quaternary structure, NDH is composed of at least 16 different subunits, 5 of which are encoded in the nucleus.

Its subcellular location is the plastid. The protein resides in the chloroplast thylakoid membrane. The catalysed reaction is a plastoquinone + NADH + (n+1) H(+)(in) = a plastoquinol + NAD(+) + n H(+)(out). It catalyses the reaction a plastoquinone + NADPH + (n+1) H(+)(in) = a plastoquinol + NADP(+) + n H(+)(out). Its function is as follows. NDH shuttles electrons from NAD(P)H:plastoquinone, via FMN and iron-sulfur (Fe-S) centers, to quinones in the photosynthetic chain and possibly in a chloroplast respiratory chain. The immediate electron acceptor for the enzyme in this species is believed to be plastoquinone. Couples the redox reaction to proton translocation, and thus conserves the redox energy in a proton gradient. This chain is NAD(P)H-quinone oxidoreductase subunit 5, chloroplastic (ndhF), found in Populus alba (White poplar).